The primary structure comprises 100 residues: Urease subunit gamma (100 aa).

The protein belongs to the urease gamma subunit family. As to quaternary structure, heterotrimer of UreA (gamma), UreB (beta) and UreC (alpha) subunits. Three heterotrimers associate to form the active enzyme.

Its subcellular location is the cytoplasm. It catalyses the reaction urea + 2 H2O + H(+) = hydrogencarbonate + 2 NH4(+). Its pathway is nitrogen metabolism; urea degradation; CO(2) and NH(3) from urea (urease route): step 1/1. This is Urease subunit gamma from Rhodopseudomonas palustris (strain BisB5).